The primary structure comprises 253 residues: MNAATSGIQLNAQTLSQQPAMNTPLIHRSFRDDYTGLVSAGDGLYKRKLKVPSTTRCNKFKWCSIGWSIGALIIFLVYKLEKPHVQPTSNGNLSLIEPEKLVSESQLIQKILNATTPQTTTPEIPSSTEPQELVTEILNTTTPQTTTPEIPSSTEPQELVTEIPSSTEPQEEIFSIFKSPKPEEPGGINSIPQYEQESNNVEDEPPPNKPEEEEDHDNQPLEERHTVPILGDVIIRNKTIIIDGGNETIIIKP.

Residues 62 to 78 form a helical membrane-spanning segment; it reads WCSIGWSIGALIIFLVY. Positions 141–158 are enriched in low complexity; sequence TTPQTTTPEIPSSTEPQE. A disordered region spans residues 141-225; sequence TTPQTTTPEI…HDNQPLEERH (85 aa). Residues 200-216 are compositionally biased toward acidic residues; sequence NVEDEPPPNKPEEEEDH.

The protein resides in the host membrane. This is an uncharacterized protein from Aedes vexans (Inland floodwater mosquito).